The primary structure comprises 60 residues: Large ribosomal subunit protein uL30 (60 aa).

It belongs to the universal ribosomal protein uL30 family. As to quaternary structure, part of the 50S ribosomal subunit.

The sequence is that of Large ribosomal subunit protein uL30 from Agathobacter rectalis (strain ATCC 33656 / DSM 3377 / JCM 17463 / KCTC 5835 / VPI 0990) (Eubacterium rectale).